A 136-amino-acid polypeptide reads, in one-letter code: Protein PsiE (136 aa).

4 helical membrane-spanning segments follow: residues 15-35 (ILQTVLNLGLLCLGLILVVFL), 55-75 (YELVEGLVVYFLYFEFIALIV), 82-102 (FHFPLRYFVYIGITAIVRLII), and 108-128 (PLDVLIYSAAILLLVITLWLC).

Belongs to the PsiE family.

The protein resides in the cell inner membrane. This chain is Protein PsiE, found in Escherichia coli (strain SE11).